Reading from the N-terminus, the 319-residue chain is MSDKLIRAIAKDGMIRIFATETTELVDEASKIHDCTPTAAAALGRMLTAGTMMGAMLKSDKEVVTLQINGGGMAKGVTVTAYSDCSVKGYIGNPHVDLPLNTENGKLNVGEAIGKNGGLTVIKDLGLKDPYVGQVPIYSGEIAEDLAYYFTASEQIPSAVALGVLVDRDHSIKKAGGFIIQLLPGADELLGDLLTYRLDEIPSLTTMLSEGKTIEEVIEFIFDGMDLKILEEETPKYKCDCSREKVERALLSIGYKDLKELYDEGKEEELKCHFCNKAYKFTKEDIGKLLEEKEKSIADEVSEEMKKAEEKEKEEKNKK.

2 cysteine pairs are disulfide-bonded: C239–C241 and C272–C275. Residues 300 to 319 are disordered; it reads EVSEEMKKAEEKEKEEKNKK.

Belongs to the HSP33 family. Post-translationally, under oxidizing conditions two disulfide bonds are formed involving the reactive cysteines. Under reducing conditions zinc is bound to the reactive cysteines and the protein is inactive.

Its subcellular location is the cytoplasm. Its function is as follows. Redox regulated molecular chaperone. Protects both thermally unfolding and oxidatively damaged proteins from irreversible aggregation. Plays an important role in the bacterial defense system toward oxidative stress. The polypeptide is 33 kDa chaperonin (Clostridium perfringens (strain ATCC 13124 / DSM 756 / JCM 1290 / NCIMB 6125 / NCTC 8237 / Type A)).